A 109-amino-acid polypeptide reads, in one-letter code: LTGHLCCMMIWWQATQVISPPLPVIREENNSHKMGVSLFPLKRVVTTSSTQLEMIFNCLCSRVVRTLCSRTQETLVRIQLGQNKASFHLLKSPSRRFIFNCYRAIFMFI.

A signal peptide spans 1-16; that stretch reads LTGHLCCMMIWWQATQ. Positions 17–43 are excised as a propeptide; sequence VISPPLPVIREENNSHKMGVSLFPLKR.

Post-translationally, contains 2 disulfide bonds. In terms of tissue distribution, expressed by the venom gland.

It is found in the secreted. In terms of biological role, probable ion channel inhibitor. The chain is U16-hexatoxin-Hi1a from Hadronyche infensa (Fraser island funnel-web spider).